We begin with the raw amino-acid sequence, 271 residues long: Shikimate dehydrogenase (NADP(+)) (271 aa).

Shikimate contacts are provided by residues 15–17 and T62; that span reads SKS. Residue K66 is the Proton acceptor of the active site. E78 contacts NADP(+). Shikimate is bound by residues N87 and D103. NADP(+) contacts are provided by residues 127–131, 151–156, and M214; these read GAGGA and NRTQAK. A shikimate-binding site is contributed by Y216. G238 contacts NADP(+).

Belongs to the shikimate dehydrogenase family. In terms of assembly, homodimer.

The enzyme catalyses shikimate + NADP(+) = 3-dehydroshikimate + NADPH + H(+). Its pathway is metabolic intermediate biosynthesis; chorismate biosynthesis; chorismate from D-erythrose 4-phosphate and phosphoenolpyruvate: step 4/7. Involved in the biosynthesis of the chorismate, which leads to the biosynthesis of aromatic amino acids. Catalyzes the reversible NADPH linked reduction of 3-dehydroshikimate (DHSA) to yield shikimate (SA). The polypeptide is Shikimate dehydrogenase (NADP(+)) (Shewanella pealeana (strain ATCC 700345 / ANG-SQ1)).